A 178-amino-acid polypeptide reads, in one-letter code: Ribonuclease M5 (178 aa).

Positions 10 to 94 (DGVIVCEGKT…YVDMNARLKN (85 aa)) constitute a Toprim domain. Residues Glu-16, Asp-62, and Asp-64 each contribute to the Mg(2+) site.

Belongs to the ribonuclease M5 family. Requires Mg(2+) as cofactor.

Its subcellular location is the cytoplasm. It carries out the reaction Endonucleolytic cleavage of RNA, removing 21 and 42 nucleotides, respectively, from the 5'- and 3'-termini of a 5S-rRNA precursor.. Its function is as follows. Required for correct processing of both the 5' and 3' ends of 5S rRNA precursor. Cleaves both sides of a double-stranded region yielding mature 5S rRNA in one step. The polypeptide is Ribonuclease M5 (rnmV) (Mycoplasma genitalium (strain ATCC 33530 / DSM 19775 / NCTC 10195 / G37) (Mycoplasmoides genitalium)).